The following is a 275-amino-acid chain: MAEVNRIHYELEYTEGISQQMRIPERLKIASGSSEEPPGLLNASHSTMMLVPERIVIAGDDNDARFGRPRDLDLIQSTPLETVELKTPPRVLTLNDQPLDFLEPEPAANSTAQPREEMKSHFRSRREQCRSENSTMRRNGQINKHDFASPSPSRAPVRVCPPLISPEDSQNLNSASGVLNYIKSTTRRAYQQVLEVLDDSQRGRASLVTFDASVENTPDDAGLTDAASLRRQIIKLNRRLQLLEHENKERAKREMVMYSLTVAFWLVNSWIWLRR.

The Cytoplasmic segment spans residues 1-255 (MAEVNRIHYE…ENKERAKREM (255 aa)). The disordered stretch occupies residues 100–171 (DFLEPEPAAN…PLISPEDSQN (72 aa)). Over residues 114–130 (PREEMKSHFRSRREQCR) the composition is skewed to basic and acidic residues. A compositionally biased stretch (polar residues) spans 131-142 (SENSTMRRNGQI). Residues 223–253 (LTDAASLRRQIIKLNRRLQLLEHENKERAKR) adopt a coiled-coil conformation. Residues 256–273 (VMYSLTVAFWLVNSWIWL) traverse the membrane as a helical; Anchor for type IV membrane protein segment. The Extracellular segment spans residues 274–275 (RR).

This sequence belongs to the Tango11 family.

The protein resides in the mitochondrion outer membrane. Its subcellular location is the peroxisome. Plays a role in mitochondrial and peroxisomal fission. Promotes the recruitment and association of the fission mediator dynamin-related protein 1 (DNM1L) to the mitochondrial surface. This is Mitochondrial fission factor homolog A from Danio rerio (Zebrafish).